We begin with the raw amino-acid sequence, 215 residues long: Small ribosomal subunit protein uS3c (215 aa).

A KH type-2 domain is found at 43–116 (IKNYIKKNMK…KLNMAITRIA (74 aa)).

It belongs to the universal ribosomal protein uS3 family. As to quaternary structure, part of the 30S ribosomal subunit.

The protein resides in the plastid. Its subcellular location is the chloroplast. This chain is Small ribosomal subunit protein uS3c (rps3), found in Morus indica (Mulberry).